Reading from the N-terminus, the 199-residue chain is COMM domain-containing protein 2 (199 aa).

A COMM domain is found at 123 to 190; it reads SYHNLEWRLD…QALEEMKTNH (68 aa).

It belongs to the COMM domain-containing protein 2 family. In terms of assembly, component of the commander complex consisting of the CCC subcomplex and the retriever subcomplex. Component of the CCC (COMMD/CCDC22/CCDC93) subcomplex consisting of COMMD1, COMMD2, COMMD3, COMMD4, COMMD5, COMMD6, COMMD7, COMMD8, COMMD9, COMMD10, CCDC22 and CCDC93; within the complex forms a heterodimer with COMMD3. Interacts with RELA, RELB, NFKB1/p105, NFKB2/p100. Interacts with CCDC22, CCDC93, SCNN1B, CUL3, CUL4B, CUL5, CUL7. Ubiquitous.

It is found in the cytoplasm. Functionally, scaffold protein in the commander complex that is essential for endosomal recycling of transmembrane cargos; the commander complex is composed of the CCC subcomplex and the retriever subcomplex. May modulate activity of cullin-RING E3 ubiquitin ligase (CRL) complexes. May down-regulate activation of NF-kappa-B. The chain is COMM domain-containing protein 2 (COMMD2) from Homo sapiens (Human).